Here is a 614-residue protein sequence, read N- to C-terminus: DNA mismatch repair protein MutL (614 aa).

The protein belongs to the DNA mismatch repair MutL/HexB family.

Functionally, this protein is involved in the repair of mismatches in DNA. It is required for dam-dependent methyl-directed DNA mismatch repair. May act as a 'molecular matchmaker', a protein that promotes the formation of a stable complex between two or more DNA-binding proteins in an ATP-dependent manner without itself being part of a final effector complex. The sequence is that of DNA mismatch repair protein MutL from Thermoanaerobacter sp. (strain X514).